The chain runs to 415 residues: Translation initiation factor 2 subunit gamma (415 aa).

The tr-type G domain maps to 7-206 (QPEVNIGVVG…GIEEYIKTPY (200 aa)). Residues 16 to 23 (GHVDHGKT) form a G1 region. Mg(2+) contacts are provided by aspartate 19, threonine 23, glycine 44, and threonine 46. Residue 19–24 (DHGKTT) participates in GTP binding. The interval 44–48 (GMTIK) is G2. Positions 59, 62, 74, and 77 each coordinate Zn(2+). Residues 93-96 (DAPG) are G3. GTP is bound by residues 149–152 (NKVD) and 184–186 (SAL). Residues 149–152 (NKVD) form a G4 region. Positions 184–186 (SAL) are G5.

It belongs to the TRAFAC class translation factor GTPase superfamily. Classic translation factor GTPase family. EIF2G subfamily. In terms of assembly, heterotrimer composed of an alpha, a beta and a gamma chain. The cofactor is Mg(2+).

The catalysed reaction is GTP + H2O = GDP + phosphate + H(+). EIF-2 functions in the early steps of protein synthesis by forming a ternary complex with GTP and initiator tRNA. This Saccharolobus solfataricus (strain ATCC 35092 / DSM 1617 / JCM 11322 / P2) (Sulfolobus solfataricus) protein is Translation initiation factor 2 subunit gamma.